We begin with the raw amino-acid sequence, 256 residues long: 5'-nucleotidase SurE (256 aa).

A divalent metal cation contacts are provided by aspartate 8, aspartate 9, serine 40, and asparagine 92.

It belongs to the SurE nucleotidase family. A divalent metal cation serves as cofactor.

It is found in the cytoplasm. It carries out the reaction a ribonucleoside 5'-phosphate + H2O = a ribonucleoside + phosphate. Its function is as follows. Nucleotidase that shows phosphatase activity on nucleoside 5'-monophosphates. The polypeptide is 5'-nucleotidase SurE (Rhizobium meliloti (strain 1021) (Ensifer meliloti)).